Here is a 156-residue protein sequence, read N- to C-terminus: ATP synthase subunit b (156 aa).

A helical membrane pass occupies residues 7-27; sequence LIGQTIAFIVFVWFCMKFVWP.

This sequence belongs to the ATPase B chain family. As to quaternary structure, F-type ATPases have 2 components, F(1) - the catalytic core - and F(0) - the membrane proton channel. F(1) has five subunits: alpha(3), beta(3), gamma(1), delta(1), epsilon(1). F(0) has three main subunits: a(1), b(2) and c(10-14). The alpha and beta chains form an alternating ring which encloses part of the gamma chain. F(1) is attached to F(0) by a central stalk formed by the gamma and epsilon chains, while a peripheral stalk is formed by the delta and b chains.

The protein resides in the cell inner membrane. Its function is as follows. F(1)F(0) ATP synthase produces ATP from ADP in the presence of a proton or sodium gradient. F-type ATPases consist of two structural domains, F(1) containing the extramembraneous catalytic core and F(0) containing the membrane proton channel, linked together by a central stalk and a peripheral stalk. During catalysis, ATP synthesis in the catalytic domain of F(1) is coupled via a rotary mechanism of the central stalk subunits to proton translocation. Component of the F(0) channel, it forms part of the peripheral stalk, linking F(1) to F(0). In Idiomarina loihiensis (strain ATCC BAA-735 / DSM 15497 / L2-TR), this protein is ATP synthase subunit b.